The primary structure comprises 358 residues: Alanine racemase (358 aa).

Lys35 acts as the Proton acceptor; specific for D-alanine in catalysis. Residue Lys35 is modified to N6-(pyridoxal phosphate)lysine. A substrate-binding site is contributed by Arg130. Tyr255 acts as the Proton acceptor; specific for L-alanine in catalysis. A substrate-binding site is contributed by Met303.

It belongs to the alanine racemase family. It depends on pyridoxal 5'-phosphate as a cofactor.

It carries out the reaction L-alanine = D-alanine. It functions in the pathway amino-acid biosynthesis; D-alanine biosynthesis; D-alanine from L-alanine: step 1/1. Functionally, catalyzes the interconversion of L-alanine and D-alanine. May also act on other amino acids. This chain is Alanine racemase (alr), found in Shewanella woodyi (strain ATCC 51908 / MS32).